The following is a 573-amino-acid chain: Proline--tRNA ligase (573 aa).

The protein belongs to the class-II aminoacyl-tRNA synthetase family. ProS type 1 subfamily. Homodimer.

The protein localises to the cytoplasm. The enzyme catalyses tRNA(Pro) + L-proline + ATP = L-prolyl-tRNA(Pro) + AMP + diphosphate. Catalyzes the attachment of proline to tRNA(Pro) in a two-step reaction: proline is first activated by ATP to form Pro-AMP and then transferred to the acceptor end of tRNA(Pro). As ProRS can inadvertently accommodate and process non-cognate amino acids such as alanine and cysteine, to avoid such errors it has two additional distinct editing activities against alanine. One activity is designated as 'pretransfer' editing and involves the tRNA(Pro)-independent hydrolysis of activated Ala-AMP. The other activity is designated 'posttransfer' editing and involves deacylation of mischarged Ala-tRNA(Pro). The misacylated Cys-tRNA(Pro) is not edited by ProRS. The sequence is that of Proline--tRNA ligase from Geobacter sp. (strain M21).